The primary structure comprises 248 residues: Isoprenyl transferase (248 aa).

The active site involves D28. D28 serves as a coordination point for Mg(2+). Residues 29 to 32, W33, R41, H45, and 73 to 75 each bind substrate; these read GNGR and SSE. The Proton acceptor role is filled by N76. Substrate contacts are provided by residues W77, R79, R196, and 202 to 204; that span reads RLS. E215 is a binding site for Mg(2+).

Belongs to the UPP synthase family. Homodimer. The cofactor is Mg(2+).

Its function is as follows. Catalyzes the condensation of isopentenyl diphosphate (IPP) with allylic pyrophosphates generating different type of terpenoids. This Zymomonas mobilis subsp. mobilis (strain ATCC 31821 / ZM4 / CP4) protein is Isoprenyl transferase.